A 414-amino-acid chain; its full sequence is UDP-N-acetylmuramoylalanine--D-glutamate ligase (414 aa).

Position 104 to 110 (104 to 110 (GSNGKST)) interacts with ATP.

The protein belongs to the MurCDEF family.

It localises to the cytoplasm. The enzyme catalyses UDP-N-acetyl-alpha-D-muramoyl-L-alanine + D-glutamate + ATP = UDP-N-acetyl-alpha-D-muramoyl-L-alanyl-D-glutamate + ADP + phosphate + H(+). Its pathway is cell wall biogenesis; peptidoglycan biosynthesis. In terms of biological role, cell wall formation. Catalyzes the addition of glutamate to the nucleotide precursor UDP-N-acetylmuramoyl-L-alanine (UMA). In Francisella philomiragia subsp. philomiragia (strain ATCC 25017 / CCUG 19701 / FSC 153 / O#319-036), this protein is UDP-N-acetylmuramoylalanine--D-glutamate ligase.